The following is a 455-amino-acid chain: Probable alpha-galactosidase B (455 aa).

Residues 1 to 16 (MIEFLALITLISRANA) form the signal peptide. Intrachain disulfides connect cysteine 39–cysteine 71 and cysteine 121–cysteine 151. Asparagine 42 carries N-linked (GlcNAc...) asparagine glycosylation. The Nucleophile role is filled by aspartate 149. Asparagine 177 and asparagine 192 each carry an N-linked (GlcNAc...) asparagine glycan. A substrate-binding site is contributed by 222–226 (NWGNA). Aspartate 244 acts as the Proton donor in catalysis. An N-linked (GlcNAc...) asparagine glycan is attached at asparagine 395.

This sequence belongs to the glycosyl hydrolase 27 family.

The protein localises to the secreted. It carries out the reaction Hydrolysis of terminal, non-reducing alpha-D-galactose residues in alpha-D-galactosides, including galactose oligosaccharides, galactomannans and galactolipids.. In terms of biological role, hydrolyzes a variety of simple alpha-D-galactoside as well as more complex molecules such as oligosaccharides and polysaccharides. In Emericella nidulans (strain FGSC A4 / ATCC 38163 / CBS 112.46 / NRRL 194 / M139) (Aspergillus nidulans), this protein is Probable alpha-galactosidase B (aglB).